Consider the following 337-residue polypeptide: Putative transcription activator protein HfaB (337 aa).

The span at 303–313 (AYNNLGTNNAQ) shows a compositional bias: polar residues. Residues 303–337 (AYNNLGTNNAQTRDDPSRWNARRDPDIRDAKRGRY) form a disordered region. A compositionally biased stretch (basic and acidic residues) spans 314–337 (TRDDPSRWNARRDPDIRDAKRGRY).

In terms of biological role, required for the attachment of the holdfast to the cell. May be involved in the positive regulation of hfaC. In Caulobacter vibrioides (strain ATCC 19089 / CIP 103742 / CB 15) (Caulobacter crescentus), this protein is Putative transcription activator protein HfaB (hfaB).